The following is a 75-amino-acid chain: Translational regulator CsrA (75 aa).

It belongs to the CsrA/RsmA family. In terms of assembly, homodimer; the beta-strands of each monomer intercalate to form a hydrophobic core, while the alpha-helices form wings that extend away from the core.

The protein resides in the cytoplasm. A translational regulator that binds mRNA to regulate translation initiation and/or mRNA stability. Usually binds in the 5'-UTR at or near the Shine-Dalgarno sequence preventing ribosome-binding, thus repressing translation. Its main target seems to be the major flagellin gene, while its function is anatagonized by FliW. This Exiguobacterium sp. (strain ATCC BAA-1283 / AT1b) protein is Translational regulator CsrA.